Consider the following 872-residue polypeptide: Exoglucanase A (872 aa).

Residues 1–40 (MSTLGKRAGVRRRVRAVATAATATALVAVPLTTLATSASA) form the signal peptide. Residues 41–477 (APVHVDNPYA…PVIGGTTPVE (437 aa)) are catalytic. Intrachain disulfides connect C140–C202 and C374–C428. D188 functions as the Proton donor in the catalytic mechanism. D410 acts as the Nucleophile in catalysis. Fibronectin type-III domains are found at residues 484-569 (VPTG…TQSG), 579-667 (VPAG…TQTG), and 677-765 (VPTG…TQAA). The 110-residue stretch at 763–872 (QAATSGGCTV…TLNGVACTLG (110 aa)) folds into the CBM2 domain. C770 and C869 are joined by a disulfide.

It belongs to the glycosyl hydrolase 6 (cellulase B) family.

It carries out the reaction Hydrolysis of (1-&gt;4)-beta-D-glucosidic linkages in cellulose and cellotetraose, releasing cellobiose from the non-reducing ends of the chains.. Its function is as follows. This enzyme hydrolyzes 1,4-beta-D-glucosidic linkages of cellulose. Weak activity against carboxymethylcellulose, bacterial microcrystalline cellulose and barley beta-glucan. Also has weak endoglucanase activity. Hydrolyzes glucosidic bonds with inversion of anomeric configuration. This Cellulomonas fimi (strain ATCC 484 / DSM 20113 / JCM 1341 / CCUG 24087 / LMG 16345 / NBRC 15513 / NCIMB 8980 / NCTC 7547 / NRS-133) protein is Exoglucanase A (cbhA).